The chain runs to 499 residues: Probable cytosol aminopeptidase (499 aa).

Lys263 and Asp268 together coordinate Mn(2+). Lys275 is a catalytic residue. The Mn(2+) site is built by Asp286, Asp345, and Glu347. Arg349 is a catalytic residue.

This sequence belongs to the peptidase M17 family. Mn(2+) is required as a cofactor.

The protein resides in the cytoplasm. The catalysed reaction is Release of an N-terminal amino acid, Xaa-|-Yaa-, in which Xaa is preferably Leu, but may be other amino acids including Pro although not Arg or Lys, and Yaa may be Pro. Amino acid amides and methyl esters are also readily hydrolyzed, but rates on arylamides are exceedingly low.. It carries out the reaction Release of an N-terminal amino acid, preferentially leucine, but not glutamic or aspartic acids.. Functionally, presumably involved in the processing and regular turnover of intracellular proteins. Catalyzes the removal of unsubstituted N-terminal amino acids from various peptides. The chain is Probable cytosol aminopeptidase from Bradyrhizobium sp. (strain BTAi1 / ATCC BAA-1182).